A 134-amino-acid polypeptide reads, in one-letter code: Photosystem II assembly factor lipoprotein Psb27 (134 aa).

An N-terminal signal peptide occupies residues 1-21 (MKRFWAMVCALFLSVSLLLTS). A lipid anchor (N-palmitoyl cysteine) is attached at Cys22. Cys22 carries S-diacylglycerol cysteine lipidation.

Belongs to the Psb27 family. Part of a photosystem II (PSII) assembly intermediate complex PSII-I; crystallized from a strain deleted of psbJ, it forms monomeric PSII before addition of the oxygen evolving complex. PSII-I includes 3 assembly factors not found in mature PSII (Psb27, Psb28 and Psb34). Binds to the lumenal side of PSII, adjacent to the CP43 (psbC) subunit.

The protein localises to the cellular thylakoid membrane. Functionally, plays a role in the repair and/or biogenesis of the calcium-manganese-oxide cluster on the lumenal face of the thylakoid membrane. Its presence in a photosystem II (PSII) preparation prevents binding of other extrinsic subunits PsbO, PsbU and PsbV, and thus assembly of calcium-manganese-oxide cluster. Psb27-containing complexes lack oxygen evolving activity and an oxidizable calcium-manganese-oxide cluster, but have a normal reaction center. The sequence is that of Photosystem II assembly factor lipoprotein Psb27 from Thermosynechococcus vestitus (strain NIES-2133 / IAM M-273 / BP-1).